Consider the following 120-residue polypeptide: Non-specific lipid-transfer protein 6 (120 aa).

An N-terminal signal peptide occupies residues 1 to 26 (MARSMSLKLACVVVLCLLVDAPLAQG). 2 cysteine pairs are disulfide-bonded: Cys-57-Cys-102 and Cys-77-Cys-116.

It belongs to the plant LTP family. In terms of tissue distribution, specifically expressed in fiber cells.

In terms of biological role, plant non-specific lipid-transfer proteins transfer phospholipids as well as galactolipids across membranes. May play a role in wax or cutin deposition in the cell walls of expanding epidermal cells and certain secretory tissues. The sequence is that of Non-specific lipid-transfer protein 6 (LTP6) from Gossypium hirsutum (Upland cotton).